The primary structure comprises 447 residues: ATP-dependent protease ATPase subunit HslU (447 aa).

Residues I18, 60–65, D259, E325, and R397 each bind ATP; that span reads GVGKTE.

It belongs to the ClpX chaperone family. HslU subfamily. As to quaternary structure, a double ring-shaped homohexamer of HslV is capped on each side by a ring-shaped HslU homohexamer. The assembly of the HslU/HslV complex is dependent on binding of ATP.

It localises to the cytoplasm. Functionally, ATPase subunit of a proteasome-like degradation complex; this subunit has chaperone activity. The binding of ATP and its subsequent hydrolysis by HslU are essential for unfolding of protein substrates subsequently hydrolyzed by HslV. HslU recognizes the N-terminal part of its protein substrates and unfolds these before they are guided to HslV for hydrolysis. In Burkholderia cenocepacia (strain HI2424), this protein is ATP-dependent protease ATPase subunit HslU.